We begin with the raw amino-acid sequence, 76 residues long: Acyl carrier protein (76 aa).

A Carrier domain is found at 1–76 (MAIFDDIKEV…DVVRYIETNK (76 aa)). Serine 36 carries the O-(pantetheine 4'-phosphoryl)serine modification.

It belongs to the acyl carrier protein (ACP) family. Post-translationally, 4'-phosphopantetheine is transferred from CoA to a specific serine of apo-ACP by AcpS. This modification is essential for activity because fatty acids are bound in thioester linkage to the sulfhydryl of the prosthetic group.

The protein localises to the cytoplasm. It functions in the pathway lipid metabolism; fatty acid biosynthesis. Its function is as follows. Carrier of the growing fatty acid chain in fatty acid biosynthesis. The polypeptide is Acyl carrier protein (Wolinella succinogenes (strain ATCC 29543 / DSM 1740 / CCUG 13145 / JCM 31913 / LMG 7466 / NCTC 11488 / FDC 602W) (Vibrio succinogenes)).